Consider the following 362-residue polypeptide: Chorismate synthase (362 aa).

The NADP(+) site is built by Arg48 and Arg54. FMN is bound by residues 131–133 (RSS), 243–244 (NA), Gly287, 302–306 (KPTSS), and Arg328.

It belongs to the chorismate synthase family. In terms of assembly, homotetramer. The cofactor is FMNH2.

It carries out the reaction 5-O-(1-carboxyvinyl)-3-phosphoshikimate = chorismate + phosphate. It participates in metabolic intermediate biosynthesis; chorismate biosynthesis; chorismate from D-erythrose 4-phosphate and phosphoenolpyruvate: step 7/7. In terms of biological role, catalyzes the anti-1,4-elimination of the C-3 phosphate and the C-6 proR hydrogen from 5-enolpyruvylshikimate-3-phosphate (EPSP) to yield chorismate, which is the branch point compound that serves as the starting substrate for the three terminal pathways of aromatic amino acid biosynthesis. This reaction introduces a second double bond into the aromatic ring system. The chain is Chorismate synthase from Rhodopseudomonas palustris (strain TIE-1).